A 500-amino-acid polypeptide reads, in one-letter code: NF-kappa-B inhibitor epsilon (500 aa).

Residues 1–10 (MNQRRSESRP) show a composition bias toward basic and acidic residues. Disordered stretches follow at residues 1–66 (MNQR…PAWA), 84–215 (LSSL…YGSS), and 222–241 (SLLG…LPHV). 3 positions are modified to phosphoserine: S157, S161, and S183. Residues 161 to 186 (SLRSLRSLPESTSAPASGPSDGSPQP) are compositionally biased toward low complexity. Over residues 196 to 209 (EPQEKEDADGERAD) the composition is skewed to basic and acidic residues. ANK repeat units follow at residues 258–291 (DGDT…DIQN), 293–322 (LYQT…SRAL), 326–355 (HGDT…EPGR), 369–398 (QGLA…DIDV), 403–432 (SGKT…QVDA), and 436–465 (NGCT…DSLL).

This sequence belongs to the NF-kappa-B inhibitor family. In terms of assembly, interacts with RELA, REL, NFKB1 nuclear factor NF-kappa-B p50 subunit and NFKB2 nuclear factor NF-kappa-B p52 subunit. Interacts with HNRNPA2B1; the interaction may be mediated by the RRM2 domain of HNRNPA2B1, and HNRNPA2B1 may interact simultaneously with FAM76B and either NFKBIA or NFKBIE to form a complex. In terms of processing, serine phosphorylated; followed by proteasome-dependent degradation. As to expression, highly expressed in spleen, testis and lung, followed by kidney, pancreas, heart, placenta and brain. Also expressed in granulocytes and macrophages.

The protein resides in the cytoplasm. Its function is as follows. Sequesters NF-kappa-B transcription factor complexes in the cytoplasm, thereby inhibiting their activity. Sequestered complexes include NFKB1-RELA (p50-p65) and NFKB1-REL (p50-c-Rel) complexes. Limits B-cell activation in response to pathogens, and also plays an important role in B-cell development. The chain is NF-kappa-B inhibitor epsilon (NFKBIE) from Homo sapiens (Human).